The primary structure comprises 227 residues: MICOS complex subunit MIC19 (227 aa).

Glycine 2 is lipidated: N-myristoyl glycine. Residue serine 29 is modified to Phosphoserine. Positions 34-60 are disordered; it reads DRMKETSPSGPKSQRYSGTYGASVSDE. A compositionally biased stretch (polar residues) spans 39–55; the sequence is TSPSGPKSQRYSGTYGA. Tyrosine 49 carries the phosphotyrosine modification. Phosphoserine is present on residues serine 50, serine 56, and serine 58. Lysine 142 is modified (N6-acetyllysine). A CHCH domain is found at 180 to 222; sequence HPVCADLQAQILQCYRQNTQQTLSCSALASQYMRCVNQAKQST. 2 short sequence motifs (cx9C motif) span residues 183-193 and 204-214; these read CADLQAQILQC and CSALASQYMRC. Intrachain disulfides connect cysteine 183-cysteine 214 and cysteine 193-cysteine 204.

The protein belongs to the MICOS complex subunit Mic19 family. Metazoan Mic19 subfamily. In terms of assembly, component of the mitochondrial contact site and cristae organizing system (MICOS) complex, composed of at least MICOS10/MIC10, CHCHD3/MIC19, CHCHD6/MIC25, APOOL/MIC27, IMMT/MIC60, APOO/MIC23/MIC26 and MICOS13/MIC13. This complex was also known under the names MINOS or MitOS complex. The MICOS complex associates with mitochondrial outer membrane proteins SAMM50, MTX1 and MTX2 (together described as components of the mitochondrial outer membrane sorting assembly machinery (SAM) complex) and DNAJC11, mitochondrial inner membrane protein TMEM11 and with HSPA9. The MICOS and SAM complexes together with DNAJC11 are part of a large protein complex spanning both membranes termed the mitochondrial intermembrane space bridging (MIB) complex. Interacts with HSPA1A/HSPA1B and OPA1, preferentially with the soluble OPA1 form. Interacts with IMMT/MIC60.

The protein localises to the mitochondrion inner membrane. Its subcellular location is the cytoplasm. It localises to the nucleus. The protein resides in the mitochondrion. Component of the MICOS complex, a large protein complex of the mitochondrial inner membrane that plays crucial roles in the maintenance of crista junctions, inner membrane architecture, and formation of contact sites to the outer membrane. Has also been shown to function as a transcription factor which binds to the BAG1 promoter and represses BAG1 transcription. Plays an important role in the maintenance of the MICOS complex stability and the mitochondrial cristae morphology. This is MICOS complex subunit MIC19 (CHCHD3) from Bos taurus (Bovine).